Consider the following 727-residue polypeptide: Probable metal-nicotianamine transporter YSL14 (727 aa).

Composition is skewed to low complexity over residues Met1–Gly10 and Ala18–Gly27. Residues Met1 to Ala61 are disordered. Residues Ala45–Gly54 show a composition bias toward gly residues. Helical transmembrane passes span Ala84–Leu104, Gly107–Trp127, Cys152–Met172, Leu194–Pro214, Leu256–Gly276, Ile314–Ile334, Val359–Ile379, Val432–Phe452, Ile460–Leu480, Leu492–Leu512, Phe546–Leu566, Pro604–Ile624, Phe646–Trp666, and Val681–Leu701.

This sequence belongs to the YSL (TC 2.A.67.2) family. Expressed in leaves and at low levels in roots.

Its subcellular location is the membrane. In terms of biological role, may be involved in the transport of nicotianamine-chelated metals. This chain is Probable metal-nicotianamine transporter YSL14 (YSL14), found in Oryza sativa subsp. japonica (Rice).